Consider the following 444-residue polypeptide: N-succinylarginine dihydrolase (444 aa).

Residues 19–28, Asn110, and 137–138 each bind substrate; these read AGLSFGNVAS and HR. Glu174 is a catalytic residue. Arg214 contacts substrate. His250 is an active-site residue. Residues Asp252 and Asn362 each contribute to the substrate site. Cys368 functions as the Nucleophile in the catalytic mechanism.

This sequence belongs to the succinylarginine dihydrolase family. In terms of assembly, homodimer.

The catalysed reaction is N(2)-succinyl-L-arginine + 2 H2O + 2 H(+) = N(2)-succinyl-L-ornithine + 2 NH4(+) + CO2. It participates in amino-acid degradation; L-arginine degradation via AST pathway; L-glutamate and succinate from L-arginine: step 2/5. Catalyzes the hydrolysis of N(2)-succinylarginine into N(2)-succinylornithine, ammonia and CO(2). The polypeptide is N-succinylarginine dihydrolase (Shewanella baltica (strain OS185)).